The sequence spans 510 residues: Cytochrome P450 703A2 (510 aa).

A helical membrane pass occupies residues 2 to 22 (ILVLASLFAVLILNVLLWRWL). C451 is a binding site for heme.

It belongs to the cytochrome P450 family. The cofactor is heme.

Its subcellular location is the membrane. The catalysed reaction is dodecanoate + reduced [NADPH--hemoprotein reductase] + O2 = 7-hydroxydodecanoate + oxidized [NADPH--hemoprotein reductase] + H2O + H(+). Functionally, involved in pollen wall development. Catalyzes the conversion of medium-chain saturated fatty acids to the corresponding monohydroxylated fatty acids, with a preferential hydroxylation of lauric acid at the C-7 position. In-chain hydroxylated fatty acids, together with omega-hydroxylated fatty acids, are key monomeric aliphatic building blocks for sporopollenin synthesis during exine formation. This Arabidopsis thaliana (Mouse-ear cress) protein is Cytochrome P450 703A2.